Reading from the N-terminus, the 412-residue chain is Putative competence-damage inducible protein (412 aa).

The protein belongs to the CinA family.

This chain is Putative competence-damage inducible protein, found in Bacillus anthracis.